Consider the following 169-residue polypeptide: Neurotensin/neuromedin N (169 aa).

Positions 1–22 (MIGMNLQLVCLTLLAFSSWSLC) are cleaved as a signal peptide.

This sequence belongs to the neurotensin family. In terms of assembly, interacts with NTSR1. Interacts with SORT1. Interacts with SORL1. Neurotensin is cleaved and degraded by Angiotensin-converting enzyme (ACE) and neprilysin (MME).

The protein localises to the secreted. It localises to the cytoplasmic vesicle. It is found in the secretory vesicle. Its function is as follows. Neurotensin may play an endocrine or paracrine role in the regulation of fat metabolism. It causes contraction of smooth muscle. This chain is Neurotensin/neuromedin N (Nts), found in Rattus norvegicus (Rat).